We begin with the raw amino-acid sequence, 120 residues long: Small ribosomal subunit protein uS13 (120 aa).

The tract at residues 96–120 (PCRGQRTRTNARTRKGPRKAIAGKK) is disordered.

The protein belongs to the universal ribosomal protein uS13 family. In terms of assembly, part of the 30S ribosomal subunit. Forms a loose heterodimer with protein S19. Forms two bridges to the 50S subunit in the 70S ribosome.

In terms of biological role, located at the top of the head of the 30S subunit, it contacts several helices of the 16S rRNA. In the 70S ribosome it contacts the 23S rRNA (bridge B1a) and protein L5 of the 50S subunit (bridge B1b), connecting the 2 subunits; these bridges are implicated in subunit movement. Contacts the tRNAs in the A and P-sites. This Neisseria gonorrhoeae (strain ATCC 700825 / FA 1090) protein is Small ribosomal subunit protein uS13.